Here is a 602-residue protein sequence, read N- to C-terminus: Elongation factor 4 (602 aa).

Residues 7-189 form the tr-type G domain; it reads SKIRNFCIIA…AIVRRVPPPQ (183 aa). GTP contacts are provided by residues 19 to 24 and 136 to 139; these read DHGKST and NKVD.

The protein belongs to the TRAFAC class translation factor GTPase superfamily. Classic translation factor GTPase family. LepA subfamily.

It localises to the cell inner membrane. The catalysed reaction is GTP + H2O = GDP + phosphate + H(+). In terms of biological role, required for accurate and efficient protein synthesis under certain stress conditions. May act as a fidelity factor of the translation reaction, by catalyzing a one-codon backward translocation of tRNAs on improperly translocated ribosomes. Back-translocation proceeds from a post-translocation (POST) complex to a pre-translocation (PRE) complex, thus giving elongation factor G a second chance to translocate the tRNAs correctly. Binds to ribosomes in a GTP-dependent manner. The protein is Elongation factor 4 of Prochlorococcus marinus (strain MIT 9301).